The following is a 775-amino-acid chain: MNEEIGFLKNQLFADVKDLERKKKRRVPPEQRRRVFRACKHCRQKKIKCNGGQPCISCKTLNIECVYAQKSQNKTLSREYLEELSERQLCLEYIFSRMCPNFNLETKNLISISKKLSENENLPVSKIAEVTNELDTLVRINDQLSRNHISGTTEEMQSSSSLIAGEVQPGISFRDQLKVGKLEDTLYLGPTTSEAFIERLQNELELESISEDDLYSKRLSPSVSYSEFDEQLLLHARSLIPSKAVVEFLINSFFINVQTNLFVYHPHFFKCRLEIFLAMENQIDAGFLCILLMVLAFGNQYTAEQQEDVSKSNFHASNIGNRLFSAALSIFPLVLLQSDVSAVQSSLLIGLYLQSTIYEKSSFAYFGLAIKFAVALGLHKNSDDPSLTQNSKELRNRLLWSVFCIDRFVSMTTGRRPSIPLECISIPYPVILPDLEIPGSQSIVENMRAVINLAKLTNEICDSLYWNPSPSFESQVNSVRRIYARLELWKSDLHSSVVFDESAVQHPLFRSNAHVQMIYDNAIMLTTRVIMVKKLKDKDLTAENRRYIQLCVESATRVINIAHLLLTHKCLSSLSFFGLHVPFASAPILLLSLHYENSQDIQAVVTKLWQVLEFLSSRCEFARESLNYLKSFNKQLSRRNAPDINNPIADFQNSFQNWQSWVGDMSHGDMLSTFKLTGESSNGSNSTPNEAFQPFDQTSSLYNVPGLNKSYVSNQPSLLTPETFLPDPVLNLEVDKQWTAPTFLSWTELLGPTNVSEQSSHTAEQTSNLTLEKNG.

A DNA-binding region (zn(2)-C6 fungal-type) is located at residues Cys-39–Cys-65. Ser-208 is modified (phosphoserine). 2 disordered regions span residues Leu-676–Phe-695 and Asn-754–Gly-775.

Its subcellular location is the nucleus. Functionally, transcription factor that activates the nmt1 promoter. Regulation of thiamine repressible genes. Positively regulates conjugation during meiosis. This chain is Thiamine repressible genes regulatory protein thi1 (thi1), found in Schizosaccharomyces pombe (strain 972 / ATCC 24843) (Fission yeast).